The primary structure comprises 150 residues: U1 small nuclear ribonucleoprotein C (150 aa).

A Matrin-type zinc finger spans residues 4 to 36 (YYCDYCKSYLTHDTMSVRKSHLQGRNHIKFYCD). Residues 66 to 132 (SDAKKSNGSS…GLPLPPPAVY (67 aa)) form a disordered region. Positions 80-92 (DIDKKENSSDHNK) are enriched in basic and acidic residues. Residues 103-112 (NDNDDDDDEM) are compositionally biased toward acidic residues. Over residues 115–130 (LPPPPNLSGLPLPPPA) the composition is skewed to pro residues.

The protein belongs to the U1 small nuclear ribonucleoprotein C family. In terms of assembly, U1 snRNP is composed of the 7 core Sm proteins B/B', D1, D2, D3, E, F and G that assemble in a heptameric protein ring on the Sm site of the small nuclear RNA to form the core snRNP, and at least 3 U1 snRNP-specific proteins U1-70K, U1-A and U1-C. U1-C interacts with U1 snRNA and the 5' splice-site region of the pre-mRNA.

Its subcellular location is the nucleus. Functionally, component of the spliceosomal U1 snRNP, which is essential for recognition of the pre-mRNA 5' splice-site and the subsequent assembly of the spliceosome. U1-C is directly involved in initial 5' splice-site recognition for both constitutive and regulated alternative splicing. The interaction with the 5' splice-site seems to precede base-pairing between the pre-mRNA and the U1 snRNA. Stimulates commitment or early (E) complex formation by stabilizing the base pairing of the 5' end of the U1 snRNA and the 5' splice-site region. This Candida albicans (strain SC5314 / ATCC MYA-2876) (Yeast) protein is U1 small nuclear ribonucleoprotein C.